Reading from the N-terminus, the 88-residue chain is Small ribosomal subunit protein bS20 (88 aa).

Disordered regions lie at residues 1 to 22 and 69 to 88; these read MPNIKSAIKRVKTNEKRRAQNA and KNAASRQKSRLAKKLNGLSA.

The protein belongs to the bacterial ribosomal protein bS20 family.

Binds directly to 16S ribosomal RNA. The polypeptide is Small ribosomal subunit protein bS20 (Shouchella clausii (strain KSM-K16) (Alkalihalobacillus clausii)).